We begin with the raw amino-acid sequence, 300 residues long: Glutamyl-Q tRNA(Asp) synthetase (300 aa).

L-glutamate contacts are provided by residues 14 to 18 (RFAPT) and E50. A 'HIGH' region motif is present at residues 17–27 (PTPSGFLHFGS). Residues C106, C108, Y120, and C124 each coordinate Zn(2+). 2 residues coordinate L-glutamate: Y177 and R195. Positions 233–237 (KLGKS) match the 'KMSKS' region motif. K236 contacts ATP.

Belongs to the class-I aminoacyl-tRNA synthetase family. GluQ subfamily. The cofactor is Zn(2+).

In terms of biological role, catalyzes the tRNA-independent activation of glutamate in presence of ATP and the subsequent transfer of glutamate onto a tRNA(Asp). Glutamate is transferred on the 2-amino-5-(4,5-dihydroxy-2-cyclopenten-1-yl) moiety of the queuosine in the wobble position of the QUC anticodon. This is Glutamyl-Q tRNA(Asp) synthetase from Pseudomonas putida (strain ATCC 47054 / DSM 6125 / CFBP 8728 / NCIMB 11950 / KT2440).